Reading from the N-terminus, the 547-residue chain is Chaperonin GroEL (547 aa).

Residues 30-33 (TLGP), lysine 51, 87-91 (DGTTT), glycine 415, and aspartate 495 contribute to the ATP site.

It belongs to the chaperonin (HSP60) family. In terms of assembly, forms a cylinder of 14 subunits composed of two heptameric rings stacked back-to-back. Interacts with the co-chaperonin GroES.

It localises to the cytoplasm. The catalysed reaction is ATP + H2O + a folded polypeptide = ADP + phosphate + an unfolded polypeptide.. Together with its co-chaperonin GroES, plays an essential role in assisting protein folding. The GroEL-GroES system forms a nano-cage that allows encapsulation of the non-native substrate proteins and provides a physical environment optimized to promote and accelerate protein folding. This chain is Chaperonin GroEL, found in Allorhizobium ampelinum (strain ATCC BAA-846 / DSM 112012 / S4) (Agrobacterium vitis (strain S4)).